A 675-amino-acid polypeptide reads, in one-letter code: DNA ligase (675 aa).

Residues 41-45 (DAEYD), 90-91 (SL), and E120 contribute to the NAD(+) site. Catalysis depends on K122, which acts as the N6-AMP-lysine intermediate. 4 residues coordinate NAD(+): R143, E178, K295, and K319. Zn(2+) is bound by residues C413, C416, C431, and C436. The 80-residue stretch at 596-675 (GVPQTFAGKT…ADFLQLIDRV (80 aa)) folds into the BRCT domain.

The protein belongs to the NAD-dependent DNA ligase family. LigA subfamily. The cofactor is Mg(2+). Mn(2+) is required as a cofactor.

It carries out the reaction NAD(+) + (deoxyribonucleotide)n-3'-hydroxyl + 5'-phospho-(deoxyribonucleotide)m = (deoxyribonucleotide)n+m + AMP + beta-nicotinamide D-nucleotide.. DNA ligase that catalyzes the formation of phosphodiester linkages between 5'-phosphoryl and 3'-hydroxyl groups in double-stranded DNA using NAD as a coenzyme and as the energy source for the reaction. It is essential for DNA replication and repair of damaged DNA. The protein is DNA ligase of Heliobacterium modesticaldum (strain ATCC 51547 / Ice1).